The sequence spans 185 residues: Elongation factor P (185 aa).

Belongs to the elongation factor P family.

The protein resides in the cytoplasm. Its pathway is protein biosynthesis; polypeptide chain elongation. Functionally, involved in peptide bond synthesis. Stimulates efficient translation and peptide-bond synthesis on native or reconstituted 70S ribosomes in vitro. Probably functions indirectly by altering the affinity of the ribosome for aminoacyl-tRNA, thus increasing their reactivity as acceptors for peptidyl transferase. This Streptococcus pyogenes serotype M4 (strain MGAS10750) protein is Elongation factor P.